Here is a 151-residue protein sequence, read N- to C-terminus: Nucleoside diphosphate kinase (151 aa).

ATP-binding residues include lysine 9, phenylalanine 57, arginine 85, threonine 91, arginine 102, and asparagine 112. Catalysis depends on histidine 115, which acts as the Pros-phosphohistidine intermediate.

Belongs to the NDK family. It depends on Mg(2+) as a cofactor.

The protein localises to the cytoplasm. The catalysed reaction is a 2'-deoxyribonucleoside 5'-diphosphate + ATP = a 2'-deoxyribonucleoside 5'-triphosphate + ADP. It catalyses the reaction a ribonucleoside 5'-diphosphate + ATP = a ribonucleoside 5'-triphosphate + ADP. In terms of biological role, major role in the synthesis of nucleoside triphosphates other than ATP. The ATP gamma phosphate is transferred to the NDP beta phosphate via a ping-pong mechanism, using a phosphorylated active-site intermediate. The sequence is that of Nucleoside diphosphate kinase from Archaeoglobus fulgidus (strain ATCC 49558 / DSM 4304 / JCM 9628 / NBRC 100126 / VC-16).